The chain runs to 483 residues: Malonate-semialdehyde dehydrogenase 2 (483 aa).

Positions 152, 176, 179, 180, and 229 each coordinate NAD(+). Cys284 serves as the catalytic Nucleophile. Glu384 contributes to the NAD(+) binding site.

Belongs to the aldehyde dehydrogenase family. IolA subfamily. Homotetramer.

It catalyses the reaction 3-oxopropanoate + NAD(+) + CoA + H2O = hydrogencarbonate + acetyl-CoA + NADH + H(+). The enzyme catalyses 2-methyl-3-oxopropanoate + NAD(+) + CoA + H2O = propanoyl-CoA + hydrogencarbonate + NADH + H(+). It participates in polyol metabolism; myo-inositol degradation into acetyl-CoA; acetyl-CoA from myo-inositol: step 7/7. Its function is as follows. Catalyzes the oxidation of malonate semialdehyde (MSA) and methylmalonate semialdehyde (MMSA) into acetyl-CoA and propanoyl-CoA, respectively. Is involved in a myo-inositol catabolic pathway. Bicarbonate, and not CO2, is the end-product of the enzymatic reaction. This is Malonate-semialdehyde dehydrogenase 2 from Geobacillus thermodenitrificans (strain NG80-2).